The chain runs to 321 residues: Phospho-N-acetylmuramoyl-pentapeptide-transferase (321 aa).

10 helical membrane-spanning segments follow: residues 1–21 (MVYL…PVLI), 50–70 (MGGL…IIFI), 76–96 (IILL…DDYI), 112–132 (FLAQ…FNLT), 140–160 (IPFI…IVFW), 173–193 (GLDG…AIMA), 198–218 (ATSI…FLPF), 225–245 (VFMG…ISIM), 250–270 (LSLL…MIQV), and 300–320 (VVTV…WIGV).

It belongs to the glycosyltransferase 4 family. MraY subfamily. The cofactor is Mg(2+).

Its subcellular location is the cell membrane. It catalyses the reaction UDP-N-acetyl-alpha-D-muramoyl-L-alanyl-gamma-D-glutamyl-L-lysyl-D-alanyl-D-alanine + di-trans,octa-cis-undecaprenyl phosphate = Mur2Ac(oyl-L-Ala-gamma-D-Glu-L-Lys-D-Ala-D-Ala)-di-trans,octa-cis-undecaprenyl diphosphate + UMP. It functions in the pathway cell wall biogenesis; peptidoglycan biosynthesis. Its function is as follows. Catalyzes the initial step of the lipid cycle reactions in the biosynthesis of the cell wall peptidoglycan: transfers peptidoglycan precursor phospho-MurNAc-pentapeptide from UDP-MurNAc-pentapeptide onto the lipid carrier undecaprenyl phosphate, yielding undecaprenyl-pyrophosphoryl-MurNAc-pentapeptide, known as lipid I. This Staphylococcus saprophyticus subsp. saprophyticus (strain ATCC 15305 / DSM 20229 / NCIMB 8711 / NCTC 7292 / S-41) protein is Phospho-N-acetylmuramoyl-pentapeptide-transferase.